The primary structure comprises 706 residues: Centrosomal protein kizuna (706 aa).

Residues 63 to 113 (QRAKTRNLELLGNVENLASKLKEFSIDCSRLLQKRMEYKNHITRLKKDRRK) adopt a coiled-coil conformation. Over residues 105–116 (TRLKKDRRKMGS) the composition is skewed to basic residues. Disordered stretches follow at residues 105–184 (TRLK…LCMH), 215–347 (VREK…ASRG), 571–603 (EIKP…QSPV), 620–665 (SVAQ…KTKP), and 677–706 (ESDD…DFYD). Over residues 118–127 (GKSEADEHPS) the composition is skewed to basic and acidic residues. Composition is skewed to polar residues over residues 128–156 (RLST…NDGA) and 164–180 (HTEQ…SQSG). Over residues 215–251 (VREKQMESDWDISQRAREQQRQEELKSPHTTLKEAEV) the composition is skewed to basic and acidic residues. Positions 272–283 (TRSPSPDTTDPS) are enriched in low complexity. Residues 293–304 (GEDEEESAEDKD) show a composition bias toward acidic residues. Positions 308-320 (PINQNHSDYTSNI) are enriched in polar residues. The segment covering 586-598 (EEQEIQSAEEDSA) has biased composition (acidic residues). The segment covering 638 to 648 (PDAHKLEKPEV) has biased composition (basic and acidic residues).

It belongs to the kizuna family.

The protein localises to the cytoplasm. It is found in the cytoskeleton. Its subcellular location is the microtubule organizing center. The protein resides in the centrosome. It localises to the cilium basal body. In terms of biological role, centrosomal protein required for establishing a robust mitotic centrosome architecture that can endure the forces that converge on the centrosomes during spindle formation. Required for stabilizing the expanded pericentriolar material around the centriole. This Danio rerio (Zebrafish) protein is Centrosomal protein kizuna (kiz).